The primary structure comprises 469 residues: 3-isopropylmalate dehydratase large subunit (469 aa).

[4Fe-4S] cluster-binding residues include C347, C407, and C410.

The protein belongs to the aconitase/IPM isomerase family. LeuC type 1 subfamily. In terms of assembly, heterodimer of LeuC and LeuD. [4Fe-4S] cluster serves as cofactor.

The catalysed reaction is (2R,3S)-3-isopropylmalate = (2S)-2-isopropylmalate. Its pathway is amino-acid biosynthesis; L-leucine biosynthesis; L-leucine from 3-methyl-2-oxobutanoate: step 2/4. Functionally, catalyzes the isomerization between 2-isopropylmalate and 3-isopropylmalate, via the formation of 2-isopropylmaleate. This is 3-isopropylmalate dehydratase large subunit from Prochlorococcus marinus (strain NATL1A).